Here is a 117-residue protein sequence, read N- to C-terminus: Structural toxin peptide sea anemone type 9a (117 aa).

Positions 1 to 23 (MKTIIAIFSLAAMIVLVRPTPLE) are cleaved as a signal peptide. 3 consecutive repeat copies span residues 28-56 (TRSIINVPCKKCYKKDSNGVCRKIFGCQE), 57-88 (KRNIIDPPCRKCYKKDSNNKCVRIAGCGNEAV), and 89-117 (KRAIINPQGCARCHKPDPNGKCRKIHGCS). Residues 29–117 (RSIINVPCKK…GKCRKIHGCS (89 aa)) are 3 X approximate tandem repeats.

In terms of processing, contains 6 disulfide bonds. Expressed outside of acontia.

It localises to the secreted. Its subcellular location is the nematocyst. Putative neurotoxin. The protein is Structural toxin peptide sea anemone type 9a of Calliactis polypus (Hermit crab anemone).